We begin with the raw amino-acid sequence, 246 residues long: Mast cell protease-like protein (246 aa).

The signal sequence occupies residues 1 to 18; sequence MQALLFLMALLLPSGAGA. Residues 19 to 20 constitute a propeptide, activation peptide; that stretch reads EE. Residues 21–244 enclose the Peptidase S1 domain; the sequence is IIGGVESEPH…HVPWINRVIK (224 aa). C50 and C66 are disulfide-bonded. Active-site charge relay system residues include H65 and D109. 2 disulfide bridges follow: C143–C208 and C174–C187. The Charge relay system role is filled by S202.

The protein belongs to the peptidase S1 family. Granzyme subfamily.

The polypeptide is Mast cell protease-like protein (Mcptl) (Mus musculus (Mouse)).